Reading from the N-terminus, the 601-residue chain is Potassium-transporting ATPase potassium-binding subunit (601 aa).

Transmembrane regions (helical) follow at residues 3 to 23 (ASAW…AWPL), 62 to 82 (HYAL…YALQ), 132 to 152 (LGLS…AFAL), 179 to 199 (AWVL…QGVI), 283 to 303 (LTNL…CFAF), 314 to 334 (VAIL…VTAA), 367 to 387 (FGIS…CGAV), 397 to 417 (LGGM…GGAG), 419 to 439 (GLYG…LMIG), 459 to 479 (VAIL…VLAP), 523 to 543 (VLLA…VLAI), and 564 to 584 (GPLF…LNYV).

The protein belongs to the KdpA family. In terms of assembly, the system is composed of three essential subunits: KdpA, KdpB and KdpC.

It is found in the cell inner membrane. In terms of biological role, part of the high-affinity ATP-driven potassium transport (or Kdp) system, which catalyzes the hydrolysis of ATP coupled with the electrogenic transport of potassium into the cytoplasm. This subunit binds the periplasmic potassium ions and delivers the ions to the membrane domain of KdpB through an intramembrane tunnel. The protein is Potassium-transporting ATPase potassium-binding subunit of Paracidovorax citrulli (strain AAC00-1) (Acidovorax citrulli).